A 636-amino-acid polypeptide reads, in one-letter code: DNA mismatch repair protein MutL (636 aa).

Residues 362-393 form a disordered region; that stretch reads RKTPEVHEEAEKPEFLVKQEAKNSEEPKNETE. A compositionally biased stretch (basic and acidic residues) spans 363 to 393; that stretch reads KTPEVHEEAEKPEFLVKQEAKNSEEPKNETE.

The protein belongs to the DNA mismatch repair MutL/HexB family.

Functionally, this protein is involved in the repair of mismatches in DNA. It is required for dam-dependent methyl-directed DNA mismatch repair. May act as a 'molecular matchmaker', a protein that promotes the formation of a stable complex between two or more DNA-binding proteins in an ATP-dependent manner without itself being part of a final effector complex. The chain is DNA mismatch repair protein MutL from Lactobacillus helveticus (strain DPC 4571).